Consider the following 320-residue polypeptide: tRNA(Ile)-lysidine synthase (320 aa).

Position 33–38 (33–38) interacts with ATP; it reads SGGPDS.

Belongs to the tRNA(Ile)-lysidine synthase family.

It is found in the cytoplasm. It catalyses the reaction cytidine(34) in tRNA(Ile2) + L-lysine + ATP = lysidine(34) in tRNA(Ile2) + AMP + diphosphate + H(+). In terms of biological role, ligates lysine onto the cytidine present at position 34 of the AUA codon-specific tRNA(Ile) that contains the anticodon CAU, in an ATP-dependent manner. Cytidine is converted to lysidine, thus changing the amino acid specificity of the tRNA from methionine to isoleucine. The chain is tRNA(Ile)-lysidine synthase from Mycolicibacterium paratuberculosis (strain ATCC BAA-968 / K-10) (Mycobacterium paratuberculosis).